We begin with the raw amino-acid sequence, 218 residues long: dTTP/UTP pyrophosphatase (218 aa).

Asp76 acts as the Proton acceptor in catalysis.

This sequence belongs to the Maf family. YhdE subfamily. A divalent metal cation is required as a cofactor.

It is found in the cytoplasm. It catalyses the reaction dTTP + H2O = dTMP + diphosphate + H(+). It carries out the reaction UTP + H2O = UMP + diphosphate + H(+). Nucleoside triphosphate pyrophosphatase that hydrolyzes dTTP and UTP. May have a dual role in cell division arrest and in preventing the incorporation of modified nucleotides into cellular nucleic acids. The sequence is that of dTTP/UTP pyrophosphatase from Cytophaga hutchinsonii (strain ATCC 33406 / DSM 1761 / CIP 103989 / NBRC 15051 / NCIMB 9469 / D465).